The following is a 56-amino-acid chain: uncharacterized protein (56 aa).

2 helical membrane-spanning segments follow: residues 6–26 and 29–49; these read VILL…LLNG and VDFL…FVVV.

The protein localises to the cell membrane. This is an uncharacterized protein from Bacillus subtilis (strain 168).